Reading from the N-terminus, the 483-residue chain is MGDDRPFVCNAPGCGQRFTNEDHLAVHKHKHEMTLKFGPARTDSVIIADQTPTPTRFLKNCEEVGLFNELASSFEHEFKKAADEDEKKAAAGPLDMSLPSTPDIKIKEEEPVEVDSSPPDSPASSPCSPPLKEKEVTPKPVLISTPTPTIVRPGSLPLHLGYDPLHPTLPSPTSVITQAPPSNRQMGSPTGSLPLVMHLANGQTMPVLPGPPVQMPSVISLARPVSMVPNIPGIPGPPVNSSGSISPSGHPIPSEAKMRLKATLTHQVSSINGGCGMVVGTASTMVTARPEQSQILIQHPDAPSPAQPQVSPAQPTPSTGGRRRRTVDEDPDERRQRFLERNRAAASRCRQKRKLWVSSLEKKAEELTSQNIQLSNEVTLLRNEVAQLKQLLLAHKDCPVTALQKKTQGYLESPKESSEPTGSPAPVIQHSSATAPSNGLSVRSAAEAVATSVLTQMASQRTELSMPIQSHVIMTPQSQSAGR.

Residues Met1 to Met285 form a transactivation domain region. Residues Phe7–His31 form a C2H2-type zinc finger. The residue at position 51 (Thr51) is a Phosphothreonine; by MAPK11. A phosphothreonine mark is found at Thr53 and Thr101. Residue Lys107 forms a Glycyl lysine isopeptide (Lys-Gly) (interchain with G-Cter in SUMO1) linkage. 2 disordered regions span residues Glu110–Pro148 and His299–Ala345. Low complexity-rich tracts occupy residues Val114–Pro126 and Gln307–Gly320. The segment at Arg325–Arg483 is essential for binding adenovirus 2 E1A. Over residues Thr326–Arg343 the composition is skewed to basic and acidic residues. Residues Asp332 to His395 enclose the bZIP domain. The tract at residues Arg334 to Lys354 is basic motif. The interval Leu360–Leu388 is leucine-zipper. The segment at Thr407–Gly439 is disordered. Ser413 and Ser423 each carry phosphoserine. Over residues Gln429–Gly439 the composition is skewed to polar residues.

This sequence belongs to the bZIP family. In terms of assembly, homodimer; binds DNA as homodimer. Heterodimer; heterodimerizes with other members of ATF family and with JUN family members. Interacts with JNK2; the interaction does not phosphorylate ATF7 but acts as a docking site for other ATF-associated partners such as JUN family members. Interacts (via its transactivation domain) with TAF12 (isoforms TAFII15 and TAFII20); the interaction potentiates the transactivation activity (isoform TAFII20 only) and is inhibited by ATF7 sumoylation. Interacts with TAF4; the interaction inhibits the TAF12-dependent transactivation. Interacts with MAPK9; the interaction does not phosphorylate ATF7 but acts as a docking site for ATF7-associated partners such as JUN. Interacts with Ku complex components XRCC6 and XRCC7. Interacts with TERT. (Microbial infection) Interacts with adenovirus 2 E1A; the interaction enhances the ATF7-mediated viral transactivation activity which requires the zinc-binding domains of both E1A and ATF7. Post-translationally, on EGF stimulation, phosphorylated first on Thr-53 allowing subsequent phosphorylation on Thr-51. This latter phosphorylation prevents sumoylation, increases binding to TAF12 and enhances transcriptional activity. In terms of processing, sumoylation delays nuclear localization and inhibits transactivation activity through preventing binding to TAF12. RANBP2 appears to be the specific E3 ligase. On EGF stimulation, phosphorylated first on Thr-53 allowing subsequent phosphorylation on Thr-51. This latter phosphorylation prevents sumoylation, increases binding to TAF12 and enhances transcriptional activity. Social isolation stress as well as TNF-alpha also induce the phosphorylation of ATF7. Phosphorylated in proliferating colonic and small intestinal epithelial cells. As to expression, expressed in various tissues including heart, brain, placenta, lung and skeletal muscle. Highest levels in skeletal muscle. Lowest in lung and placenta. In terms of tissue distribution, strongly expressed in skeletal muscle. Also expressed at lower levels in heart and lung.

The protein localises to the nucleus. It is found in the nucleoplasm. The protein resides in the chromosome. Its subcellular location is the telomere. It localises to the cytoplasm. In terms of biological role, stress-responsive chromatin regulator that plays a role in various biological processes including innate immunological memory, adipocyte differentiation or telomerase regulation. In absence of stress, contributes to the formation of heterochromatin and heterochromatin-like structure by recruiting histone H3K9 tri- and di-methyltransferases thus silencing the transcription of target genes such as STAT1 in adipocytes, or genes involved in innate immunity in macrophages and adipocytes. Stress induces ATF7 phosphorylation that disrupts interactions with histone methyltransferase and enhances the association with coactivators containing histone acetyltransferase and/or histone demethylase, leading to disruption of the heterochromatin-like structure and subsequently transcriptional activation. In response to TNF-alpha, which is induced by various stresses, phosphorylated ATF7 and telomerase are released from telomeres leading to telomere shortening. Also plays a role in maintaining epithelial regenerative capacity and protecting against cell death during intestinal epithelial damage and repair. Acts as a dominant repressor of the E-selectin/NF-ELAM1/delta-A promoter. Functionally, acts as a negative regulator, inhibiting both ATF2 and ATF7 transcriptional activities. It may exert these effects by sequestrating in the cytoplasm the Thr-53 phosphorylating kinase, preventing activation. This is Cyclic AMP-dependent transcription factor ATF-7 (ATF7) from Homo sapiens (Human).